A 393-amino-acid chain; its full sequence is UDP-sulfoquinovose synthase (393 aa).

NAD(+) is bound by residues 31 to 35, 74 to 75, arginine 100, and asparagine 118; these read DNLST and DI. Substrate is bound at residue arginine 100. Threonine 144 and tyrosine 182 together coordinate substrate. Threonine 144 is an active-site residue. Tyrosine 182 and lysine 186 together coordinate NAD(+). Tyrosine 182 acts as the Proton acceptor in catalysis. The active site involves lysine 186. Residue glutamine 209 participates in substrate binding. Residue valine 212 participates in NAD(+) binding. Residues 238 to 241, 253 to 255, and 326 to 328 contribute to the substrate site; these read VVNR, TVY, and RVE.

The protein belongs to the NAD(P)-dependent epimerase/dehydratase family. NAD(+) serves as cofactor.

The catalysed reaction is sulfite + UDP-alpha-D-glucose + H(+) = UDP-alpha-D-6-sulfoquinovose + H2O. In terms of biological role, catalyzes the biosynthesis of UDP-sulfoquinovose by the transfer of sulfite to UDP-glucose. Important for the assembly of the S-layer N-glycans. The reaction probably occurs through an NAD(+)-dependent oxidation/dehydration/enolization/sulfite addition process. In vitro, in the absence of sulfite, UDP-D-glucose is converted via UDP-4-keto-D-glucose to UDP-D-glucose-5,6-ene. In Sulfolobus acidocaldarius (strain ATCC 33909 / DSM 639 / JCM 8929 / NBRC 15157 / NCIMB 11770), this protein is UDP-sulfoquinovose synthase.